We begin with the raw amino-acid sequence, 511 residues long: Sodium/proline symporter 2 (511 aa).

Helical transmembrane passes span 16 to 36 (WQTY…GYYG), 54 to 74 (IGPY…WMIM), 85 to 105 (LSAM…YFVV), 139 to 159 (IISG…GFVS), 175 to 195 (GLLM…YLAV), 204 to 224 (VIML…LNGI), 246 to 266 (VLGI…PHII), 286 to 306 (ISWM…GIAF), 327 to 347 (ILFH…AIMS), 381 to 401 (FLMV…WIAW), 410 to 430 (LVGN…IFSL), 438 to 458 (TGAL…IVWI), and 467 to 487 (LFGM…TYFV).

It belongs to the sodium:solute symporter (SSF) (TC 2.A.21) family.

Its subcellular location is the cell membrane. The enzyme catalyses L-proline(in) + Na(+)(in) = L-proline(out) + Na(+)(out). In terms of biological role, catalyzes the sodium-dependent uptake of extracellular L-proline. The sequence is that of Sodium/proline symporter 2 (putP2) from Staphylococcus saprophyticus subsp. saprophyticus (strain ATCC 15305 / DSM 20229 / NCIMB 8711 / NCTC 7292 / S-41).